A 465-amino-acid polypeptide reads, in one-letter code: Lysosomal dipeptide transporter MFSD1 (465 aa).

The interval 1-23 (MEEEDEEARALLAGGPDEADRGA) is disordered. The short motif at 11–12 (LL) is the Dileucine internalization motif element. 12 helical membrane-spanning segments follow: residues 39 to 59 (LVHR…SYFC), 83 to 103 (LLYA…GFLI), 113 to 133 (TIIF…GGIF), 135 to 155 (AFWL…SLAV), 170 to 191 (LNLV…NMNL), 213 to 233 (ITLM…LALA), 266 to 286 (LWLI…FIGL), 304 to 324 (AINS…GLLV), 331 to 351 (IIWV…LAFT), 361 to 381 (LLGL…AFVV), 392 to 412 (FMQS…GMIL), and 418 to 438 (LFLE…VVLL).

It belongs to the major facilitator superfamily. Homodimer. Interacts with lysosomal protein GLMP (via lumenal domain); the interaction starts while both proteins are still in the endoplasmic reticulum and is required for stabilization of MFSD1 in lysosomes but has no direct effect on its targeting to lysosomes or transporter activity.

The protein localises to the lysosome membrane. The enzyme catalyses L-alpha-aminoacyl-L-arginine(out) = L-alpha-aminoacyl-L-arginine(in). It catalyses the reaction L-arginyl-L-alpha-amino acid(out) = L-arginyl-L-alpha-amino acid(in). It carries out the reaction L-arginyl-glycine(out) = L-arginyl-glycine(in). The catalysed reaction is L-alpha-aminoacyl-L-lysine(out) = L-alpha-aminoacyl-L-lysine(in). The enzyme catalyses L-aspartyl-L-lysine(out) = L-aspartyl-L-lysine(in). It catalyses the reaction L-alanyl-L-lysine(out) = L-alanyl-L-lysine(in). It carries out the reaction L-lysyl-L-alpha-amino acid(out) = L-lysyl-L-alpha-amino acid(in). The catalysed reaction is L-lysyl-L-alanine(out) = L-lysyl-L-alanine(in). The enzyme catalyses L-lysyl-L-lysine(out) = L-lysyl-L-lysine(in). It catalyses the reaction L-lysyl-glycine(out) = L-lysyl-glycine(in). It carries out the reaction L-alpha-aminoacyl-L-histidine(out) = L-alpha-aminoacyl-L-histidine(in). The catalysed reaction is L-histidyl-L-alpha-amino acid(out) = L-histidyl-L-alpha-amino acid(in). The enzyme catalyses L-histidyl-glycine(out) = L-histidyl-glycine(in). Its function is as follows. Lysosomal dipeptide uniporter that selectively exports lysine, arginine or histidine-containing dipeptides with a net positive charge from the lysosome lumen into the cytosol. Could play a role in a specific type of protein O-glycosylation indirectly regulating macrophages migration and tissue invasion. Also essential for liver homeostasis. The chain is Lysosomal dipeptide transporter MFSD1 from Pongo abelii (Sumatran orangutan).